Consider the following 181-residue polypeptide: Probable cobalt-precorrin-6B C(15)-methyltransferase (decarboxylating) (181 aa).

S-adenosyl-L-methionine contacts are provided by residues Thr-16, 40–44, Asp-61, and Ala-89; that span reads GCGSG.

It belongs to the methyltransferase superfamily. Archaeal-type CbiT family.

The enzyme catalyses Co-precorrin-6B + S-adenosyl-L-methionine = Co-precorrin-7 + S-adenosyl-L-homocysteine + CO2. Its pathway is cofactor biosynthesis; adenosylcobalamin biosynthesis; cob(II)yrinate a,c-diamide from sirohydrochlorin (anaerobic route): step 8/10. In terms of biological role, catalyzes the methylation of C-15 in cobalt-precorrin-6B followed by the decarboxylation of C-12 to form cobalt-precorrin-7. The protein is Probable cobalt-precorrin-6B C(15)-methyltransferase (decarboxylating) of Methanococcus maripaludis (strain C5 / ATCC BAA-1333).